The chain runs to 139 residues: uncharacterized protein (139 aa).

In terms of domain architecture, HTH cro/C1-type spans 8–63; the sequence is LRELRRARKLTVNQLAVYSGISSATISKIENGKRGTPKPATIKKLAAVLKVPYENL. The segment at residues 19–38 is a DNA-binding region (H-T-H motif); the sequence is VNQLAVYSGISSATISKIEN.

This is an uncharacterized protein from Bacillus subtilis (strain 168).